The primary structure comprises 1088 residues: RNA-directed RNA polymerase (1088 aa).

Residues 501–687 enclose the RdRp catalytic domain; it reads LSYGDVTRFL…AKRYLAGGKI (187 aa).

The protein belongs to the reoviridae RNA-directed RNA polymerase family. As to quaternary structure, interacts with VP3 (Potential). Interacts with VP2; this interaction activates VP1. Interacts with NSP5; this interaction is probably necessary for the formation of functional virus factories. Interacts with NSP2; this interaction is weak. It depends on Mg(2+) as a cofactor.

The protein localises to the virion. It catalyses the reaction RNA(n) + a ribonucleoside 5'-triphosphate = RNA(n+1) + diphosphate. Its function is as follows. RNA-directed RNA polymerase that is involved in both transcription and genome replication. Together with VP3 capping enzyme, forms an enzyme complex positioned near the channels situated at each of the five-fold vertices of the core. Following infection, the outermost layer of the virus is lost, leaving a double-layered particle (DLP) made up of the core and VP6 shell. VP1 then catalyzes the transcription of fully conservative plus-strand genomic RNAs that are extruded through the DLP's channels into the cytoplasm where they function as mRNAs for translation of viral proteins. One copy of each of the viral (+)RNAs is also recruited during core assembly, together with newly synthesized polymerase complexes and VP2. The polymerase of these novo-formed particles catalyzes the synthesis of complementary minus-strands leading to dsRNA formation. To do so, the polymerase specifically recognizes and binds 4 bases 5'-UGUG-3' in the conserved 3'-sequence of plus-strand RNA templates. VP2 presumably activates the autoinhibited VP1-RNA complex to coordinate packaging and genome replication. Once dsRNA synthesis is complete, the polymerase switches to the transcriptional mode, thus providing secondary transcription. This is RNA-directed RNA polymerase from Rotavirus A (strain RVA/Human/Japan/KU/1995/G1P1A[8]) (RV-A).